We begin with the raw amino-acid sequence, 629 residues long: Plastin-1 (629 aa).

Met1 bears the N-acetylmethionine mark. 2 EF-hand domains span residues 11-46 and 51-86; these read EELEELQEAFNKIDIDNSGYVSDYELQDLFKEASLP and KVREIVEKILSVADSNKDGKISFEEFVSLMQELKSK. 10 residues coordinate Ca(2+): Asp24, Asp26, Ser28, Tyr30, Glu35, Asp64, Asn66, Asp68, Lys70, and Glu75. Actin-binding regions lie at residues 108–380 and 381–625; these read TSTI…CLHK and PNNN…GKGL. Calponin-homology (CH) domains follow at residues 122-238, 266-376, 395-504, and 516-625; these read EEEK…KVGL, LSPE…NTYP, SKEE…RRYT, and KVND…GKGL.

In terms of assembly, monomer. In terms of processing, phosphorylated. In terms of tissue distribution, in small intestine, colon, and kidney; relatively lower levels of expression are detected in the lung and stomach.

It localises to the cytoplasm. Its subcellular location is the cell projection. The protein resides in the stereocilium. In terms of biological role, actin-bundling protein. In the inner ear, it is required for stereocilia formation. Mediates liquid packing of actin filaments that is necessary for stereocilia to grow to their proper dimensions. This chain is Plastin-1 (PLS1), found in Homo sapiens (Human).